Consider the following 43-residue polypeptide: Putative inhibitor of glucose uptake transporter SgrT (43 aa).

In terms of biological role, acts to promote recovery from glucose-phosphate stress due to intracellular accumulation of glucose-6-phosphate caused by disruption of glycolytic flux or in the presence of (toxic) non-metabolizable glucose phosphate analogs. It may do so by inhibiting the transporter activity for glucose uptake (PtsG) as cells that overexpress this protein do not seem to import glucose although they have nearly wild-type levels of PtsG. The sequence is that of Putative inhibitor of glucose uptake transporter SgrT (sgrT) from Escherichia coli (strain K12).